Here is a 293-residue protein sequence, read N- to C-terminus: ATP synthase gamma chain (293 aa).

The protein belongs to the ATPase gamma chain family. As to quaternary structure, F-type ATPases have 2 components, CF(1) - the catalytic core - and CF(0) - the membrane proton channel. CF(1) has five subunits: alpha(3), beta(3), gamma(1), delta(1), epsilon(1). CF(0) has three main subunits: a, b and c.

It is found in the cell inner membrane. Functionally, produces ATP from ADP in the presence of a proton gradient across the membrane. The gamma chain is believed to be important in regulating ATPase activity and the flow of protons through the CF(0) complex. This chain is ATP synthase gamma chain, found in Nitrosospira multiformis (strain ATCC 25196 / NCIMB 11849 / C 71).